A 556-amino-acid polypeptide reads, in one-letter code: Formate--tetrahydrofolate ligase (556 aa).

64-71 is a binding site for ATP; that stretch reads TPAGEGKT.

Belongs to the formate--tetrahydrofolate ligase family.

It carries out the reaction (6S)-5,6,7,8-tetrahydrofolate + formate + ATP = (6R)-10-formyltetrahydrofolate + ADP + phosphate. Its pathway is one-carbon metabolism; tetrahydrofolate interconversion. This is Formate--tetrahydrofolate ligase from Actinobacillus pleuropneumoniae serotype 5b (strain L20).